Here is a 335-residue protein sequence, read N- to C-terminus: POU domain, class 5, transcription factor 2 (335 aa).

Residues M1–P23 form a disordered region. The POU-specific domain maps to D113–D187. The homeobox DNA-binding region spans R205–T264.

The protein belongs to the POU transcription factor family. Class-5 subfamily. Highly restricted to adult testis.

It is found in the nucleus. Functionally, transcription factor that binds preferentially to the octamer motif (5'-ATGTTAAT-3'). May exert a regulatory function in meiotic events that are required for terminal differentiation of male germ cell. The chain is POU domain, class 5, transcription factor 2 (Pou5f2) from Rattus norvegicus (Rat).